The sequence spans 496 residues: Probable uroporphyrinogen-III C-methyltransferase (496 aa).

Belongs to the precorrin methyltransferase family.

It catalyses the reaction uroporphyrinogen III + 2 S-adenosyl-L-methionine = precorrin-2 + 2 S-adenosyl-L-homocysteine + H(+). In terms of biological role, siroheme synthase involved in methionine biosynthesis. The sequence is that of Probable uroporphyrinogen-III C-methyltransferase from Schizosaccharomyces pombe (strain 972 / ATCC 24843) (Fission yeast).